A 252-amino-acid polypeptide reads, in one-letter code: tRNA pseudouridine synthase A (252 aa).

Aspartate 52 serves as the catalytic Nucleophile. Position 111 (tyrosine 111) interacts with substrate.

This sequence belongs to the tRNA pseudouridine synthase TruA family. Homodimer.

It catalyses the reaction uridine(38/39/40) in tRNA = pseudouridine(38/39/40) in tRNA. Formation of pseudouridine at positions 38, 39 and 40 in the anticodon stem and loop of transfer RNAs. The chain is tRNA pseudouridine synthase A from Methylorubrum populi (strain ATCC BAA-705 / NCIMB 13946 / BJ001) (Methylobacterium populi).